The primary structure comprises 298 residues: Syntaxin-4 (298 aa).

The Cytoplasmic segment spans residues 1 to 274 (MRDRTHELRQ…NQKKARKKKV (274 aa)). Residues Ser-15, Ser-29, Ser-36, Ser-117, Ser-208, and Ser-248 each carry the phosphoserine modification. Positions 38 to 163 (DDEFFQKVQT…ERIRRQLKIT (126 aa)) form a coiled coil. The interval 154-298 (ERIRRQLKIT…VIIGITITVG (145 aa)) is interaction with CENPF. The region spanning 200–262 (LNEISARHSE…ERGQEHVKIA (63 aa)) is the t-SNARE coiled-coil homology domain. The chain crosses the membrane as a helical; Anchor for type IV membrane protein span at residues 275–295 (MIAICVSVTVLILAVIIGITI). Topologically, residues 296–298 (TVG) are extracellular.

It belongs to the syntaxin family. Interacts with STXBP6. Component of the SNARE complex composed of STX4, SNAP23 and VAMP7 that interacts with SYT7 during lysosomal exocytosis. Found in a complex with VAMP8 and SNAP23. Detected in a complex with SNAP23 and STXBP4. Interacts with VAMP2. Interacts with SNAP23 and SNAPIN. Interacts with LLGL1. Interacts (via C-terminus) with CENPF. Interacts with DOC2B. Interacts with STXBP3; excludes interaction with DOC2B and SNAP25. Interacts with STXBP4; excludes interaction with VAMP2. Interacts with STXBP5L. In terms of tissue distribution, expressed in the outer and inner hair cells of the cochlea.

It is found in the cell membrane. The protein resides in the cell projection. It localises to the neuron projection. The protein localises to the stereocilium. Its function is as follows. Plasma membrane t-SNARE that mediates docking of transport vesicles. Necessary for the translocation of SLC2A4 from intracellular vesicles to the plasma membrane. In neurons, recruited at neurite tips to membrane domains rich in the phospholipid 1-oleoyl-2-palmitoyl-PC (OPPC) which promotes neurite tip surface expression of the dopamine transporter SLC6A3/DAT by facilitating fusion of SLC6A3-containing transport vesicles with the plasma membrane. Together with STXB3 and VAMP2, may also play a role in docking/fusion of intracellular GLUT4-containing vesicles with the cell surface in adipocytes and in docking of synaptic vesicles at presynaptic active zones. Required for normal hearing. The sequence is that of Syntaxin-4 (Stx4) from Mus musculus (Mouse).